The primary structure comprises 166 residues: MRRAVCPGSFDPIHNGHLEVIARAAGLFDEVIVAISTNYAKKYRFSLDERLEMARETLASLKGIVVEPVGEGLLAEYCRQRGVSAIVKGLRSSSDFDYELPMATMNRQLSGVETVFLPAEAHYIHLSSTLIKEVAGLGGNVSEYVPRSVLRRLLAGEPSANQQPRR.

Ser9 is a binding site for substrate. Residues 9-10 (SF) and His17 each bind ATP. The substrate site is built by Lys41, Leu74, and Lys88. Residues 89–91 (GLR), Glu99, and 123–129 (YIHLSST) contribute to the ATP site.

Belongs to the bacterial CoaD family. In terms of assembly, homohexamer. Mg(2+) is required as a cofactor.

It is found in the cytoplasm. It catalyses the reaction (R)-4'-phosphopantetheine + ATP + H(+) = 3'-dephospho-CoA + diphosphate. Its pathway is cofactor biosynthesis; coenzyme A biosynthesis; CoA from (R)-pantothenate: step 4/5. Functionally, reversibly transfers an adenylyl group from ATP to 4'-phosphopantetheine, yielding dephospho-CoA (dPCoA) and pyrophosphate. The chain is Phosphopantetheine adenylyltransferase from Pseudarthrobacter chlorophenolicus (strain ATCC 700700 / DSM 12829 / CIP 107037 / JCM 12360 / KCTC 9906 / NCIMB 13794 / A6) (Arthrobacter chlorophenolicus).